The following is a 166-amino-acid chain: Nucleotide-binding protein SUN_0226 (166 aa).

This sequence belongs to the YajQ family.

Its function is as follows. Nucleotide-binding protein. This chain is Nucleotide-binding protein SUN_0226, found in Sulfurovum sp. (strain NBC37-1).